The sequence spans 164 residues: UBA-like domain-containing protein 2 (164 aa).

Ser-2 bears the N-acetylserine mark. The disordered stretch occupies residues 128–164 (SSPTTFHHLHRPQPTWPPGAQQGGAQQKAMAAMDGQR). Over residues 146 to 164 (GAQQGGAQQKAMAAMDGQR) the composition is skewed to low complexity.

The protein belongs to the UBALD family.

The sequence is that of UBA-like domain-containing protein 2 (UBALD2) from Homo sapiens (Human).